A 336-amino-acid polypeptide reads, in one-letter code: CENP-A histone chaperone scm3 (336 aa).

The disordered stretch occupies residues 243 to 269 (RRRNPLLSSPKTPLRRSFSKSKVRNSN). Positions 255 to 269 (PLRRSFSKSKVRNSN) are enriched in basic residues.

Its subcellular location is the cytoplasm. The protein localises to the nucleus. Its function is as follows. Centromeric protein that plays a central role in the incorporation and maintenance of histone H3-like variant CENPA at centromeres. This is CENP-A histone chaperone scm3 from Schizosaccharomyces pombe (strain 972 / ATCC 24843) (Fission yeast).